Reading from the N-terminus, the 754-residue chain is Ribonucleoside-diphosphate reductase subunit alpha (754 aa).

Residues 4–93 (INVIKSSGVS…MFALRKHVYG (90 aa)) form the ATP-cone domain. Substrate contacts are provided by residues threonine 206, 221–222 (SC), glycine 250, 435–439 (NLCCE), and 615–619 (PCESS). Cysteine 222 and cysteine 457 are oxidised to a cystine. Catalysis depends on asparagine 435, which acts as the Proton acceptor. The active-site Cysteine radical intermediate is cysteine 437. The Proton acceptor role is filled by glutamate 439. The disordered stretch occupies residues 621–641 (QVSNSTNGYEPPRGPVSVKES).

It belongs to the ribonucleoside diphosphate reductase large chain family. In terms of assembly, heterodimer of a large and a small subunit.

It carries out the reaction a 2'-deoxyribonucleoside 5'-diphosphate + [thioredoxin]-disulfide + H2O = a ribonucleoside 5'-diphosphate + [thioredoxin]-dithiol. Under complex allosteric control mediated by deoxynucleoside triphosphates and ATP binding. The type of nucleotide bound at the specificity site determines substrate preference. It seems probable that ATP makes the enzyme reduce CDP and UDP, dGTP favors ADP reduction and dTTP favors GDP reduction. Its function is as follows. Provides the precursors necessary for DNA synthesis. Catalyzes the biosynthesis of deoxyribonucleotides from the corresponding ribonucleotides. The sequence is that of Ribonucleoside-diphosphate reductase subunit alpha (NRDA) from Escherichia coli (Bacteriophage T4).